We begin with the raw amino-acid sequence, 423 residues long: CDP-diacylglycerol--serine O-phosphatidyltransferase 2 (423 aa).

The next 9 membrane-spanning stretches (helical) occupy residues 38-58 (PHTI…SGAL), 77-97 (WAMI…TILI), 103-123 (VWRL…FLLF), 195-215 (LLLW…RHML), 222-242 (WWDS…WAGM), 294-314 (FVQV…TFFL), 319-339 (WIPP…LIAI), 359-379 (GAFC…CMKF), and 390-410 (TWLI…LLAW).

The protein belongs to the CDP-alcohol phosphatidyltransferase class-I family.

Its subcellular location is the endoplasmic reticulum membrane. The enzyme catalyses a CDP-1,2-diacyl-sn-glycerol + L-serine = a 1,2-diacyl-sn-glycero-3-phospho-L-serine + CMP + H(+). It functions in the pathway phospholipid metabolism; phosphatidylethanolamine biosynthesis; phosphatidylethanolamine from CDP-diacylglycerol: step 1/2. Catalyzes a base-exchange reaction in which the polar head group of phosphatidylethanolamine (PE) or phosphatidylcholine (PC) is replaced by L-serine. This Oryza sativa subsp. japonica (Rice) protein is CDP-diacylglycerol--serine O-phosphatidyltransferase 2 (PSS2).